The chain runs to 1047 residues: Ras GTPase-activating protein 1 (1047 aa).

At Met1 the chain carries N-acetylmethionine. One can recognise an SH2 1 domain in the interval 181-272; that stretch reads WYHGKLDRTI…LKGEKLLYPV (92 aa). One can recognise an SH3 domain in the interval 279 to 341; the sequence is EDRRRVRAIL…VEDLVEEVGR (63 aa). The SH2 2 domain maps to 351-441; it reads WFHGKISKQE…VEGYYLKEPV (91 aa). Positions 474 to 577 constitute a PH domain; the sequence is NIVKKGYLLK…WMKGLQAFCN (104 aa). The 114-residue stretch at 577–690 folds into the C2 domain; it reads NLRKSSPGTS…QKGHATDEWF (114 aa). Residue Tyr615 is modified to Phosphotyrosine. The 211-residue stretch at 764-974 folds into the Ras-GAP domain; it reads KLESLLLCTL…HRMIMFLDEL (211 aa). Ser831 is modified (phosphoserine).

As to quaternary structure, interacts with SQSTM1. Interacts with SPSB1; the interaction does not promote degradation. Interacts with CAV2 (tyrosine phosphorylated form). Directly interacts with NCK1. Interacts with PDGFRB (tyrosine phosphorylated). Interacts (via SH2 domain) with the 'Tyr-9' phosphorylated form of PDPK1. Interacts with tyrosine-phosphorylated EPHB4. Post-translationally, the N-terminus is blocked. In terms of processing, phosphorylated by SRC and LCK. The phosphorylation SRC inhibits its ability to stimulate the Ras-GTPase activity, whereas phosphorylation by LCK does not display any effect on stimulation activity. In placental villi, detected only in the trophoblast layer (cytotrophoblast and syncytiotrophoblast). Not detected in stromal, endothelial or Hofbauer cells (at protein level).

The protein localises to the cytoplasm. Inhibitory regulator of the Ras-cyclic AMP pathway. Stimulates the GTPase of normal but not oncogenic Ras p21; this stimulation may be further increased in the presence of NCK1. This Homo sapiens (Human) protein is Ras GTPase-activating protein 1 (RASA1).